Consider the following 967-residue polypeptide: Kinesin-like protein KIF28P (967 aa).

Residues 7 to 355 (DSVKAVRVRP…LRYAERERKI (349 aa)) form the Kinesin motor domain. Residue 111 to 118 (GQTGSGKS) participates in ATP binding. Residues 410 to 472 (APCPRPALSP…LQHLDRLILG (63 aa)) form the FHA domain. The stretch at 822–851 (NQIPELYLKLLKLEQETEPLRNINRALREE) forms a coiled coil.

The protein belongs to the TRAFAC class myosin-kinesin ATPase superfamily. Kinesin family.

It is found in the mitochondrion membrane. Microtubule-dependent motor protein required for mitochondrion morphology and transport of mitochondria in neuronal cells. This is Kinesin-like protein KIF28P (KIF28P) from Homo sapiens (Human).